A 195-amino-acid chain; its full sequence is Pyruvoyl-dependent arginine decarboxylase AaxB (195 aa).

Residue Ser-53 is modified to Pyruvic acid (Ser).

The protein belongs to the pyruvoyl-dependent arginine decarboxylase family. In terms of assembly, trimer of an alpha-beta dimer. The cofactor is pyruvate.

It is found in the cytoplasm. It carries out the reaction L-arginine + H(+) = agmatine + CO2. Its function is as follows. Part of the AaxABC system, catalyzes the decarboxylation of L-arginine. The arginine uptake by the bacterium in the macrophage may be a virulence factor against the host innate immune response. The chain is Pyruvoyl-dependent arginine decarboxylase AaxB (aaxB) from Chlamydia trachomatis serovar D (strain ATCC VR-885 / DSM 19411 / UW-3/Cx).